Consider the following 87-residue polypeptide: Small ribosomal subunit protein bS20 (87 aa).

The tract at residues 1 to 25 (MANSAQARKRARQNISHRNRNMSLR) is disordered. Positions 7-20 (ARKRARQNISHRNR) are enriched in basic residues.

It belongs to the bacterial ribosomal protein bS20 family.

In terms of biological role, binds directly to 16S ribosomal RNA. This chain is Small ribosomal subunit protein bS20, found in Nitrosospira multiformis (strain ATCC 25196 / NCIMB 11849 / C 71).